A 319-amino-acid polypeptide reads, in one-letter code: NADH-quinone oxidoreductase subunit H 1 (319 aa).

The next 8 helical transmembrane spans lie at Met-1 to Val-21, Phe-74 to Ile-94, Val-107 to Ala-127, Leu-147 to Leu-167, Val-179 to Ala-199, Val-238 to Leu-258, Ile-262 to Leu-282, and Phe-293 to Val-313.

It belongs to the complex I subunit 1 family. NDH-1 is composed of 14 different subunits. Subunits NuoA, H, J, K, L, M, N constitute the membrane sector of the complex.

The protein localises to the cell inner membrane. The catalysed reaction is a quinone + NADH + 5 H(+)(in) = a quinol + NAD(+) + 4 H(+)(out). Its function is as follows. NDH-1 shuttles electrons from NADH, via FMN and iron-sulfur (Fe-S) centers, to quinones in the respiratory chain. The immediate electron acceptor for the enzyme in this species is believed to be ubiquinone. Couples the redox reaction to proton translocation (for every two electrons transferred, four hydrogen ions are translocated across the cytoplasmic membrane), and thus conserves the redox energy in a proton gradient. This subunit may bind ubiquinone. In Rhodopseudomonas palustris (strain BisB5), this protein is NADH-quinone oxidoreductase subunit H 1.